We begin with the raw amino-acid sequence, 437 residues long: Adenylosuccinate synthetase (437 aa).

GTP contacts are provided by residues 12-18 (GDEGKGK) and 40-42 (GHT). Catalysis depends on Asp-13, which acts as the Proton acceptor. The Mg(2+) site is built by Asp-13 and Gly-40. IMP is bound by residues 13 to 16 (DEGK), 38 to 41 (NAGH), Thr-131, Arg-145, Gln-226, Thr-241, and Arg-305. Residue His-41 is the Proton donor of the active site. 301–307 (ATTGRRR) is a substrate binding site. GTP-binding positions include Arg-307, 333–335 (KLD), and 415–417 (SVG).

It belongs to the adenylosuccinate synthetase family. Homodimer. Mg(2+) is required as a cofactor.

It localises to the cytoplasm. It carries out the reaction IMP + L-aspartate + GTP = N(6)-(1,2-dicarboxyethyl)-AMP + GDP + phosphate + 2 H(+). It participates in purine metabolism; AMP biosynthesis via de novo pathway; AMP from IMP: step 1/2. Its function is as follows. Plays an important role in the de novo pathway of purine nucleotide biosynthesis. Catalyzes the first committed step in the biosynthesis of AMP from IMP. The chain is Adenylosuccinate synthetase from Desulfotalea psychrophila (strain LSv54 / DSM 12343).